The following is a 448-amino-acid chain: MLHRYLPMTEEDKREMLKVIGVDSIDDLFADIPESVRFRGELNIKKAKSEPELFKELSALAEKNADTKKYTSFLGAGVYDHYIPVIVDHVISRSEFYTAYTPYQPEISQGELQAIFEFQTMICELTGMDVANSSMYDGGTALAEAMLLSAAHTKKKKVLLSKTVHPEYRDVVKTYAKGQRLCVVEIPFQNGVTDLEALKMEMDEEVACVIVQYPNFFGQIEPLKDIEPIAHSGKSMFVVASNPLALGILTPPGQFGADIVVGDAQPFGIPMQFGGPHCGYFAVKSALIRKIPGRLVGQTSDEEGRRGFVLTLQAREQHIRRDKATSNICSNQALNALAASVAMTALGKKGVKEMAAMNIQKAQYAKNELVKHGFHVPFPGPFFNEFVVRLEKPVAEVNKRLLEKGIIGGYDVGRDYPELQNHMLIAVTELRTKKEIDTFVKELGDCHA.

Belongs to the GcvP family. N-terminal subunit subfamily. As to quaternary structure, the glycine cleavage system is composed of four proteins: P, T, L and H. In this organism, the P 'protein' is a heterodimer of two subunits.

The enzyme catalyses N(6)-[(R)-lipoyl]-L-lysyl-[glycine-cleavage complex H protein] + glycine + H(+) = N(6)-[(R)-S(8)-aminomethyldihydrolipoyl]-L-lysyl-[glycine-cleavage complex H protein] + CO2. In terms of biological role, the glycine cleavage system catalyzes the degradation of glycine. The P protein binds the alpha-amino group of glycine through its pyridoxal phosphate cofactor; CO(2) is released and the remaining methylamine moiety is then transferred to the lipoamide cofactor of the H protein. The protein is Probable glycine dehydrogenase (decarboxylating) subunit 1 of Geobacillus sp. (strain WCH70).